The primary structure comprises 94 residues: Small ribosomal subunit protein uS19 (94 aa).

This sequence belongs to the universal ribosomal protein uS19 family.

Functionally, protein S19 forms a complex with S13 that binds strongly to the 16S ribosomal RNA. The chain is Small ribosomal subunit protein uS19 from Desulforudis audaxviator (strain MP104C).